A 311-amino-acid chain; its full sequence is Protoheme IX farnesyltransferase 1 (311 aa).

A run of 9 helical transmembrane segments spans residues 31–51, 52–72, 97–117, 119–139, 152–172, 179–199, 225–245, 247–267, and 281–301; these read VMAL…GAVN, PVIA…AGAL, VTPG…VMTL, VLVG…YIVI, IVIG…AATG, LVLF…LALF, ILAY…FGFT, GYYG…SWKV, and LFAY…ADTI.

Belongs to the UbiA prenyltransferase family. Protoheme IX farnesyltransferase subfamily.

The protein resides in the cell inner membrane. The enzyme catalyses heme b + (2E,6E)-farnesyl diphosphate + H2O = Fe(II)-heme o + diphosphate. It functions in the pathway porphyrin-containing compound metabolism; heme O biosynthesis; heme O from protoheme: step 1/1. Converts heme B (protoheme IX) to heme O by substitution of the vinyl group on carbon 2 of heme B porphyrin ring with a hydroxyethyl farnesyl side group. In Mesorhizobium japonicum (strain LMG 29417 / CECT 9101 / MAFF 303099) (Mesorhizobium loti (strain MAFF 303099)), this protein is Protoheme IX farnesyltransferase 1.